A 1214-amino-acid chain; its full sequence is Transient receptor potential cation channel subfamily M member 4 (1214 aa).

The Cytoplasmic portion of the chain corresponds to 1–782; sequence MVVPEKEQSW…FHFWGAPVTI (782 aa). ATP contacts are provided by R171, R214, and L225. Ca(2+) is bound by residues D270, A392, D395, and E396. ATP contacts are provided by R421 and G448. Residues 783-803 form a helical membrane-spanning segment; the sequence is FMGNVVSYLLFLLLFSRVLLV. Over 804-814 the chain is Extracellular; that stretch reads DFQPAPPGSLE. Residues 815-835 traverse the membrane as a helical segment; that stretch reads LLLYFWAFTLLCEELRQGLSG. Residues E828 and Q831 each coordinate Ca(2+). Residues 836–863 are Cytoplasmic-facing; that stretch reads GGGSLASGGPGPGHASLSQRLRLYLADS. A helical membrane pass occupies residues 864 to 884; that stretch reads WNQCDLVALTCFLLGVGCRLT. Residues N865 and D868 each contribute to the Ca(2+) site. The Extracellular portion of the chain corresponds to 885-886; the sequence is PG. A helical membrane pass occupies residues 887–910; that stretch reads LYHLGRTVLCIDFMVFTVRLLHIF. Residues 911-930 lie on the Cytoplasmic side of the membrane; the sequence is TVNKQLGPKIVIVSKMMKDV. A helical transmembrane segment spans residues 931–951; sequence FFFLFFLGVWLVAYGVATEGL. Residues 952 to 963 lie on the Extracellular side of the membrane; the sequence is LRPRDSDFPSIL. The segment at residues 964–984 is an intramembrane region (pore-forming); the sequence is RRVFYRPYLQIFGQIPQEDMD. The Selectivity filter motif lies at 975–977; the sequence is FGQ. Topologically, residues 985–1019 are extracellular; sequence VALMEHSNCSSEPGFWAHPPGAQAGTCVSQYANWL. N-linked (GlcNAc...) asparagine glycosylation occurs at N992. Residues C993 and C1011 are joined by a disulfide bond. A helical membrane pass occupies residues 1020–1040; sequence VVLLLVIFLLVANILLVNLLI. Residues 1041–1214 are Cytoplasmic-facing; sequence AMFSYTFGKV…PPPDLPGSKD (174 aa). The tract at residues 1076-1176 is calmodulin-binding; that stretch reads APPFIVISHL…EYEQRLKVLE (101 aa). The stretch at 1134–1187 forms a coiled coil; the sequence is LARARDKRESDSERLKRTSQKVDLALKQLGHIREYEQRLKVLEREVQQCSRVLG. The interval 1136-1141 is mediates modulation by decavanadate and PIP2-binding; sequence RARDKR. 2 positions are modified to phosphoserine; by PKC: S1145 and S1152.

Belongs to the transient receptor (TC 1.A.4) family. LTrpC subfamily. TRPM4 sub-subfamily. Homotetramer. Phosphorylation by PKC leads to increase the sensitivity to Ca(2+). Post-translationally, sumoylated. Desumoylated by SENP1. As to expression, widely expressed with a high expression in intestine and prostate. In brain, it is both expressed in whole cerebral arteries and isolated vascular smooth muscle cells. Prominently expressed in Purkinje fibers. Expressed at higher levels in T-helper 2 (Th2) cells as compared to T-helper 1 (Th1) cells. Expressed in keratocytes.

The protein resides in the cell membrane. It is found in the endoplasmic reticulum. The protein localises to the golgi apparatus. The catalysed reaction is Na(+)(in) = Na(+)(out). It catalyses the reaction K(+)(in) = K(+)(out). With respect to regulation, displays weak voltage dependence, and repressed by decavanadate. Calmodulin-binding confers the Ca(2+) sensitivity. ATP is able to restore Ca(2+) sensitivity after desensitization. ATP inhibits channel activity. Phosphatidylinositol 4,5-bisphosphate (PIP2)-binding strongly enhances activity, by increasing the channel's Ca(2+) sensitivity and shifting its voltage dependence of activation towards negative potentials. Activity is also enhanced by 3,5-bis(trifluoromethyl)pyrazole derivative (BTP2). Exhibits pronounced temperature sensitivity, with activities strongly intensifying near physiological temperatures. In terms of biological role, calcium-activated selective cation channel that mediates membrane depolarization. While it is activated by increase in intracellular Ca(2+), it is impermeable to it. Mediates transport of monovalent cations (Na(+) &gt; K(+) &gt; Cs(+) &gt; Li(+)), leading to depolarize the membrane. It thereby plays a central role in cadiomyocytes, neurons from entorhinal cortex, dorsal root and vomeronasal neurons, endocrine pancreas cells, kidney epithelial cells, cochlea hair cells etc. Participates in T-cell activation by modulating Ca(2+) oscillations after T lymphocyte activation, which is required for NFAT-dependent IL2 production. Involved in myogenic constriction of cerebral arteries. Controls insulin secretion in pancreatic beta-cells. May also be involved in pacemaking or could cause irregular electrical activity under conditions of Ca(2+) overload. Affects T-helper 1 (Th1) and T-helper 2 (Th2) cell motility and cytokine production through differential regulation of calcium signaling and NFATC1 localization. Enhances cell proliferation through up-regulation of the beta-catenin signaling pathway. Plays a role in keratinocyte differentiation. Functionally, lacks channel activity. The sequence is that of Transient receptor potential cation channel subfamily M member 4 from Homo sapiens (Human).